Reading from the N-terminus, the 383-residue chain is Delta(12) fatty acid desaturase FAD2 (383 aa).

Residues 1-29 (MGAGGRMQDPTNGGNKTEPEPIQRVPHEK) form a disordered region. A compositionally biased stretch (basic and acidic residues) spans 17–29 (TEPEPIQRVPHEK). 2 helical membrane-spanning segments follow: residues 50 to 70 (VIRS…LYYI) and 85 to 105 (VAWP…WVIA). The Histidine box-1 motif lies at 106 to 110 (HECGH). Residues 118–138 (WLDDTVGLVLHSFLLVPYFSW) form a helical membrane-spanning segment. Residues 142–146 (HRRHH) carry the Histidine box-2 motif. A run of 3 helical transmembrane segments spans residues 180–200 (ILTL…FNVS), 226–246 (IFIS…LAMT), and 252–272 (VLTM…LITF). Residues 316–320 (HVAHH) carry the Histidine box-3 motif.

This sequence belongs to the fatty acid desaturase type 1 family. As to expression, expressed in leaves, flower buds and developing seeds.

It localises to the membrane. It functions in the pathway lipid metabolism; polyunsaturated fatty acid biosynthesis. Functionally, catalyzes the desaturation of oleic acid to linoleic acid. Introduces a double bond at position 12 of 16:1(9Z) and 18:1(9Z). This is Delta(12) fatty acid desaturase FAD2 from Calendula officinalis (Pot marigold).